A 331-amino-acid polypeptide reads, in one-letter code: CRISPR-associated endonuclease Cas1 (331 aa).

Mn(2+) is bound by residues Glu158, His223, and Asp238.

This sequence belongs to the CRISPR-associated endonuclease Cas1 family. As to quaternary structure, homodimer, forms a heterotetramer with a Cas2 homodimer. The cofactor is Mg(2+). Mn(2+) is required as a cofactor.

Functionally, CRISPR (clustered regularly interspaced short palindromic repeat), is an adaptive immune system that provides protection against mobile genetic elements (viruses, transposable elements and conjugative plasmids). CRISPR clusters contain spacers, sequences complementary to antecedent mobile elements, and target invading nucleic acids. CRISPR clusters are transcribed and processed into CRISPR RNA (crRNA). Acts as a dsDNA endonuclease. Involved in the integration of spacer DNA into the CRISPR cassette. Plasmid targeted by CRISPR locus P1 transform wild-type cells very poorly. This chain is CRISPR-associated endonuclease Cas1, found in Haloferax volcanii (strain ATCC 29605 / DSM 3757 / JCM 8879 / NBRC 14742 / NCIMB 2012 / VKM B-1768 / DS2) (Halobacterium volcanii).